Reading from the N-terminus, the 264-residue chain is tRNA pseudouridine synthase A (264 aa).

Aspartate 54 acts as the Nucleophile in catalysis. A substrate-binding site is contributed by tyrosine 113.

It belongs to the tRNA pseudouridine synthase TruA family. In terms of assembly, homodimer.

The enzyme catalyses uridine(38/39/40) in tRNA = pseudouridine(38/39/40) in tRNA. In terms of biological role, formation of pseudouridine at positions 38, 39 and 40 in the anticodon stem and loop of transfer RNAs. This Leptospira biflexa serovar Patoc (strain Patoc 1 / Ames) protein is tRNA pseudouridine synthase A.